The chain runs to 466 residues: UDP-glycosyltransferase 91B1 (466 aa).

UDP-alpha-D-glucose is bound by residues Thr-286, 342-344 (VPQ), 359-367 (HCGWGSAVE), and 381-384 (NLDQ).

Belongs to the UDP-glycosyltransferase family.

The polypeptide is UDP-glycosyltransferase 91B1 (UGT91B1) (Arabidopsis thaliana (Mouse-ear cress)).